A 770-amino-acid chain; its full sequence is Molybdenum cofactor sulfurase (770 aa).

Residue Lys-231 is modified to N6-(pyridoxal phosphate)lysine. The active site involves Cys-395. The 170-residue stretch at 601–770 (DWVSRALGVS…TVSGVIEESE (170 aa)) folds into the MOSC domain.

This sequence belongs to the class-V pyridoxal-phosphate-dependent aminotransferase family. MOCOS subfamily. Pyridoxal 5'-phosphate is required as a cofactor.

It carries out the reaction Mo-molybdopterin + L-cysteine + AH2 = thio-Mo-molybdopterin + L-alanine + A + H2O. Sulfurates the molybdenum cofactor. Sulfation of molybdenum is essential for xanthine dehydrogenase (XDH) and aldehyde oxidase (ADO) enzymes in which molybdenum cofactor is liganded by 1 oxygen and 1 sulfur atom in active form. This is Molybdenum cofactor sulfurase from Anopheles gambiae (African malaria mosquito).